We begin with the raw amino-acid sequence, 403 residues long: Phosphoglycerate kinase (403 aa).

Substrate-binding positions include 21–23, Arg36, 59–62, Arg119, and Arg154; these read DFN and HLGR. ATP-binding positions include Lys207, Gly299, Glu330, and 357–360; that span reads GGDA.

The protein belongs to the phosphoglycerate kinase family. Monomer.

The protein localises to the cytoplasm. It catalyses the reaction (2R)-3-phosphoglycerate + ATP = (2R)-3-phospho-glyceroyl phosphate + ADP. It functions in the pathway carbohydrate degradation; glycolysis; pyruvate from D-glyceraldehyde 3-phosphate: step 2/5. The sequence is that of Phosphoglycerate kinase from Chlamydia caviae (strain ATCC VR-813 / DSM 19441 / 03DC25 / GPIC) (Chlamydophila caviae).